The following is a 710-amino-acid chain: Conserved oligomeric Golgi complex subunit 2 (710 aa).

This sequence belongs to the COG2 family. In terms of assembly, component of the conserved oligomeric Golgi complex which is composed of eight different subunits and is required for normal Golgi morphology and localization.

It is found in the golgi apparatus membrane. In terms of biological role, required for normal Golgi morphology and function. This is Conserved oligomeric Golgi complex subunit 2 from Drosophila melanogaster (Fruit fly).